Reading from the N-terminus, the 201-residue chain is Retinol-binding protein 4 (201 aa).

Positions 1–18 are cleaved as a signal peptide; it reads MEWVWALVLLAALGSAQA. 3 disulfide bridges follow: C22–C178, C88–C192, and C138–C147. A substrate-binding site is contributed by Q116. The residue at position 139 (R139) is an Omega-N-methylarginine.

This sequence belongs to the calycin superfamily. Lipocalin family. Interacts with TTR. Interaction with TTR prevents its loss by filtration through the kidney glomeruli. Interacts with STRA6.

The protein resides in the secreted. Retinol-binding protein that mediates retinol transport in blood plasma. Delivers retinol from the liver stores to the peripheral tissues. Transfers the bound all-trans retinol to STRA6, that then facilitates retinol transport across the cell membrane. The sequence is that of Retinol-binding protein 4 (RBP4) from Sus scrofa (Pig).